We begin with the raw amino-acid sequence, 279 residues long: Phosphatidylglycerol--prolipoprotein diacylglyceryl transferase (279 aa).

3 helical membrane passes run 22–42, 52–72, and 89–109; these read WYGI…QAAL, LIDI…IYFV, and IWHG…SGII. R137 provides a ligand contact to a 1,2-diacyl-sn-glycero-3-phospho-(1'-sn-glycerol). 2 consecutive transmembrane segments (helical) span residues 203–223 and 235–255; these read LGET…FVEA and IRVA…FVIY.

Belongs to the Lgt family.

It localises to the cell membrane. It carries out the reaction L-cysteinyl-[prolipoprotein] + a 1,2-diacyl-sn-glycero-3-phospho-(1'-sn-glycerol) = an S-1,2-diacyl-sn-glyceryl-L-cysteinyl-[prolipoprotein] + sn-glycerol 1-phosphate + H(+). Its pathway is protein modification; lipoprotein biosynthesis (diacylglyceryl transfer). In terms of biological role, catalyzes the transfer of the diacylglyceryl group from phosphatidylglycerol to the sulfhydryl group of the N-terminal cysteine of a prolipoprotein, the first step in the formation of mature lipoproteins. In Staphylococcus epidermidis (strain ATCC 12228 / FDA PCI 1200), this protein is Phosphatidylglycerol--prolipoprotein diacylglyceryl transferase.